The primary structure comprises 430 residues: Flavin-dependent monooxygenase eupH (430 aa).

Residues 11–14 (AGIG), 33–34 (ER), Gln-43, Arg-107, Tyr-282, and Asp-306 contribute to the FAD site.

Belongs to the aromatic-ring hydroxylase family. FAD is required as a cofactor.

It functions in the pathway secondary metabolite biosynthesis; terpenoid biosynthesis. Flavin-dependent monooxygenase; part of the gene cluster that mediates the biosynthesis of eupenifeldin, a bistropolone meroterpenoid that acts as an antitumor agent. The first step of eupenifeldin biosynthesis is the biosynthesis of 3-methylorcinaldehyde performed by the non-reducing polyketide synthase eupA. Oxidative dearomatization of 3-methylorcinaldehyde likely catalyzed by the FAD-dependent monooxygenase eupB is followed by oxidative ring expansion by the 2-oxoglutarate-dependent dioxygenase eupC to provide the first tropolone metabolite, tropolone stipitaldehyde. In parallel, generation of sesquiterpene alpha-humulene from farnesylpyrophosphate (FPP) is catalyzed by the terpene cyclase eupE. The cytochrome P450 monooxygenase eupD then hydroxylates humulene to humulenol. The putative Diels-Alderase eupF probably catalyzes the formation of the tropolone-humulene skeleton by linking humulenol and the polyketide moiety. The short-chain dehydrogenase/reductase eupG and the flavin-dependent monooxygenase eupH are also essential for eupenifeldin biosynthesis and are likely the additional decorating enzymes of the tropolone-humulene skeleton to produce final eupenifeldin or derivatives. This Phoma sp protein is Flavin-dependent monooxygenase eupH.